Reading from the N-terminus, the 188-residue chain is Zinc finger protein 428 (188 aa).

The disordered stretch occupies residues 1–162 (MTETREPAET…EEEEEEGTYH (162 aa)). The segment covering 40-61 (PDSEEEEDEEEEEEETTDDPEY) has biased composition (acidic residues). Low complexity predominate over residues 84 to 94 (RAAQPPAQPCQ). Position 108 is a phosphothreonine (T108). Residues 116–129 (PATAPQEAPAPEGR) show a composition bias toward low complexity. Basic and acidic residues predominate over residues 138 to 149 (PPRAGEGRPAGR). The segment at 161–183 (YHCTECEDSFDNLGELHGHFMLH) adopts a C2H2-type zinc-finger fold.

The chain is Zinc finger protein 428 (ZNF428) from Homo sapiens (Human).